The primary structure comprises 192 residues: Fe/S biogenesis protein NfuA (192 aa).

Residues Cys149 and Cys152 each coordinate [4Fe-4S] cluster.

Belongs to the NfuA family. As to quaternary structure, homodimer. It depends on [4Fe-4S] cluster as a cofactor.

Involved in iron-sulfur cluster biogenesis. Binds a 4Fe-4S cluster, can transfer this cluster to apoproteins, and thereby intervenes in the maturation of Fe/S proteins. Could also act as a scaffold/chaperone for damaged Fe/S proteins. The protein is Fe/S biogenesis protein NfuA of Shewanella frigidimarina (strain NCIMB 400).